Here is a 97-residue protein sequence, read N- to C-terminus: Sorbitol dehydrogenase (97 aa).

Residue cysteine 44 coordinates Zn(2+). Tyrosine 50 contacts substrate. 2 residues coordinate Zn(2+): histidine 69 and glutamate 70.

It belongs to the zinc-containing alcohol dehydrogenase family. In terms of assembly, homotetramer. The cofactor is Zn(2+).

The protein resides in the mitochondrion membrane. Its subcellular location is the cell projection. It localises to the cilium. The protein localises to the flagellum. The catalysed reaction is xylitol + NAD(+) = D-xylulose + NADH + H(+). It carries out the reaction L-iditol + NAD(+) = keto-L-sorbose + NADH + H(+). It catalyses the reaction keto-D-fructose + NADH + H(+) = D-sorbitol + NAD(+). Functionally, polyol dehydrogenase that catalyzes the reversible NAD(+)-dependent oxidation of various sugar alcohols. Is active with xylitol, L-iditol and D-sorbitol (D-glucitol) as substrates, leading to the C2-oxidized products D-xylulose, L-sorbose and D-fructose, respectively. Is a key enzyme in the polyol pathway that interconverts glucose and fructose via sorbitol, which constitutes an important alternate route for glucose metabolism. May play a role in sperm motility by using sorbitol as an alternative energy source for sperm motility. This Sus scrofa (Pig) protein is Sorbitol dehydrogenase (SORD).